The following is a 412-amino-acid chain: MLCLVYNSILCKQRRISLKVLQQFRCWNISKTFLSYRTLTALAIETSCDDTSVSVVRTSDSSSHCQNEIICLNTHRTISKYEAYGGIHPTIVIHEHQKNLAKVIQRTISDAARSGITDFDLIAVTRGPGMIGPLAVGLNTAKGLAVGLQKPLLAVHHMQAHALAVQLEKSIDFPYLNILVSGGHTMLVYSNSLLNHEIIVTTSDIAVGDYLDKCAKYLGIPWDNEMPAAALEQFASPEINSTSYSLKPPIPLNTREKVHSASFSFSGLESYACRIIRKTPLNLSEKKFFAYQLQYAAFQHICQKTLLALKRLDLSKVKYLVCSGGVARNELLKKMLNDTLMVLQFEHQPTDIKLVYPSPDICSDNAAMIGYTAIQMFKAGYTSSFDVEPIRKWPINQILTVEGWLTKKNKKV.

Residues 1-78 (MLCLVYNSIL…IICLNTHRTI (78 aa)) constitute a mitochondrion transit peptide. A divalent metal cation is bound by residues histidine 157 and histidine 161. Substrate contacts are provided by residues 179 to 183 (LVSGG), aspartate 212, alanine 228, glutamate 232, 328 to 329 (RN), and serine 363. Aspartate 364 lines the a divalent metal cation pocket.

This sequence belongs to the KAE1 / TsaD family. Homodimer. Requires a divalent metal cation as cofactor.

It is found in the mitochondrion. It catalyses the reaction L-threonylcarbamoyladenylate + adenosine(37) in tRNA = N(6)-L-threonylcarbamoyladenosine(37) in tRNA + AMP + H(+). Functionally, required for the formation of a threonylcarbamoyl group on adenosine at position 37 (t(6)A37) in mitochondrial tRNAs that read codons beginning with adenine. Probably involved in the transfer of the threonylcarbamoyl moiety of threonylcarbamoyl-AMP (TC-AMP) to the N6 group of A37. Involved in mitochondrial genome maintenance. The protein is tRNA N6-adenosine threonylcarbamoyltransferase, mitochondrial (pgp1) of Schizosaccharomyces pombe (strain 972 / ATCC 24843) (Fission yeast).